A 128-amino-acid chain; its full sequence is Fluoride-specific ion channel FluC 2 (128 aa).

A run of 4 helical transmembrane segments spans residues 13–35 (ALVA…AIAG), 40–59 (LAAN…EAAA), 71–93 (LLGT…TAGL), and 97–119 (WMAA…GRAI).

The protein belongs to the fluoride channel Fluc/FEX (TC 1.A.43) family.

The protein localises to the cell membrane. It carries out the reaction fluoride(in) = fluoride(out). Fluoride-specific ion channel. Important for reducing fluoride concentration in the cell, thus reducing its toxicity. The protein is Fluoride-specific ion channel FluC 2 of Halobacterium salinarum (strain ATCC 700922 / JCM 11081 / NRC-1) (Halobacterium halobium).